Here is a 288-residue protein sequence, read N- to C-terminus: Undecaprenyl-diphosphatase (288 aa).

8 helical membrane-spanning segments follow: residues 25-45, 53-73, 93-113, 121-141, 171-191, 196-216, 231-251, and 263-283; these read GITE…NEFL, FIDM…MVIY, WKLW…GLLL, LSNF…FIWI, VLSI…GIIV, SVAA…YSGL, GQAA…LFVI, and FTVF…YGAV.

It belongs to the UppP family.

Its subcellular location is the cell membrane. The enzyme catalyses di-trans,octa-cis-undecaprenyl diphosphate + H2O = di-trans,octa-cis-undecaprenyl phosphate + phosphate + H(+). In terms of biological role, catalyzes the dephosphorylation of undecaprenyl diphosphate (UPP). Confers resistance to bacitracin. This Streptococcus thermophilus (strain CNRZ 1066) protein is Undecaprenyl-diphosphatase.